Consider the following 115-residue polypeptide: Cytochrome c (115 aa).

Heme c-binding residues include C26, C29, H30, and M91.

It belongs to the cytochrome c family. Post-translationally, binds 1 heme c group covalently per subunit.

Its subcellular location is the mitochondrion intermembrane space. Its function is as follows. Electron carrier protein. The oxidized form of the cytochrome c heme group can accept an electron from the heme group of the cytochrome c1 subunit of cytochrome reductase. Cytochrome c then transfers this electron to the cytochrome oxidase complex, the final protein carrier in the mitochondrial electron-transport chain. This Theileria annulata protein is Cytochrome c.